A 455-amino-acid chain; its full sequence is uncharacterized protein (455 aa).

Residues 1–27 (MSQRQQFQFLLSFLILIFLKFIIQIRC) form the signal peptide. At 29–434 (ESNGVIIIKN…GDDENLINSS (406 aa)) the chain is on the extracellular side. N-linked (GlcNAc...) asparagine glycosylation is found at N136, N148, N210, and N298. Residues 383–402 (SSSTTSTTSSSSSSSSSTTT) are disordered. 2 N-linked (GlcNAc...) asparagine glycosylation sites follow: N421 and N432. A helical membrane pass occupies residues 435 to 455 (SVIKFSTPIIMIIIILINIKF).

The protein resides in the membrane. This is an uncharacterized protein from Dictyostelium discoideum (Social amoeba).